The sequence spans 257 residues: 5'-nucleotidase SurE (257 aa).

A divalent metal cation contacts are provided by D8, D9, S40, and N93.

This sequence belongs to the SurE nucleotidase family. A divalent metal cation serves as cofactor.

The protein localises to the cytoplasm. The catalysed reaction is a ribonucleoside 5'-phosphate + H2O = a ribonucleoside + phosphate. Its function is as follows. Nucleotidase that shows phosphatase activity on nucleoside 5'-monophosphates. This Phenylobacterium zucineum (strain HLK1) protein is 5'-nucleotidase SurE.